The sequence spans 623 residues: Transketolase (623 aa).

M1 is subject to N-acetylmethionine. K6 and K11 each carry N6-acetyllysine. Substrate is bound at residue H37. Thiamine diphosphate contacts are provided by S40 and H77. Position 104 is a phosphoserine (S104). Residue 123-125 participates in thiamine diphosphate binding; it reads GSL. An N6-acetyllysine modification is found at K144. D155 is a binding site for Mg(2+). Thiamine diphosphate is bound by residues G156 and N185. Positions 185 and 187 each coordinate Mg(2+). 3 positions are modified to N6-acetyllysine: K204, K232, and K241. K244 and H258 together coordinate thiamine diphosphate. H258 is a substrate binding site. The residue at position 260 (K260) is an N6-acetyllysine. A Phosphotyrosine modification is found at Y275. A Phosphothreonine modification is found at T287. A Phosphoserine modification is found at S295. Residues R318 and S345 each coordinate substrate. A Phosphoserine modification is found at S345. Residue K352 forms a Glycyl lysine isopeptide (Lys-Gly) (interchain with G-Cter in SUMO2) linkage. Catalysis depends on E366, which acts as the Proton donor. A thiamine diphosphate-binding site is contributed by F392. Substrate is bound by residues H416 and D424. A thiamine diphosphate-binding site is contributed by Q428. Position 474 (R474) interacts with substrate. Residues K538 and K603 each carry the N6-acetyllysine modification.

This sequence belongs to the transketolase family. As to quaternary structure, homodimer. The cofactor is Mg(2+). Ca(2+) is required as a cofactor. Requires Mn(2+) as cofactor. Co(2+) serves as cofactor. It depends on thiamine diphosphate as a cofactor.

The catalysed reaction is D-sedoheptulose 7-phosphate + D-glyceraldehyde 3-phosphate = aldehydo-D-ribose 5-phosphate + D-xylulose 5-phosphate. Its function is as follows. Catalyzes the transfer of a two-carbon ketol group from a ketose donor to an aldose acceptor, via a covalent intermediate with the cofactor thiamine pyrophosphate. The chain is Transketolase (Tkt) from Rattus norvegicus (Rat).